The chain runs to 325 residues: MLNKIINREDLSYEESYDLFNDLLNESEIKIGAYLSALQTKGFTANEIAGFAKAMRDNAIAIDLGKGISDTCGTGGDGYSTINISTAVSIILSCFTKVAKHGNVSITSKSGSANVLDALNIKKDCNPEEAKKMIDKTNFVFLFAPNYHPALKKIMPVRKELGIKTIFNILGPLANPANPDYQIMGVNSLDLVEKVGDALKLLGVKKALVVYGNGLDELNPNDYSTICEINENEENKIYKIHPKDIGLTPSNPIPCNSPDESAKRIIKIFSGTINEDRDFILLNAAAALYASNIAKDYKEGLKLAKEVIDNGTVLKKLKEIQKYGE.

Residues G73, 76-77 (GD), T81, 83-86 (NIST), 100-108 (KHGNVSITS), and S112 contribute to the 5-phospho-alpha-D-ribose 1-diphosphate site. Anthranilate is bound at residue G73. Position 85 (S85) interacts with Mg(2+). N103 contacts anthranilate. Anthranilate is bound at residue R158. D216 and E217 together coordinate Mg(2+).

This sequence belongs to the anthranilate phosphoribosyltransferase family. Homodimer. It depends on Mg(2+) as a cofactor.

It catalyses the reaction N-(5-phospho-beta-D-ribosyl)anthranilate + diphosphate = 5-phospho-alpha-D-ribose 1-diphosphate + anthranilate. The protein operates within amino-acid biosynthesis; L-tryptophan biosynthesis; L-tryptophan from chorismate: step 2/5. Catalyzes the transfer of the phosphoribosyl group of 5-phosphorylribose-1-pyrophosphate (PRPP) to anthranilate to yield N-(5'-phosphoribosyl)-anthranilate (PRA). The chain is Anthranilate phosphoribosyltransferase from Methanococcus aeolicus (strain ATCC BAA-1280 / DSM 17508 / OCM 812 / Nankai-3).